Consider the following 30-residue polypeptide: Trypsin inhibitor 1 (30 aa).

3 disulfides stabilise this stretch: Cys-4–Cys-21, Cys-11–Cys-23, and Cys-17–Cys-29.

It belongs to the protease inhibitor I7 (squash-type serine protease inhibitor) family.

It is found in the secreted. Its function is as follows. Inhibits trypsin. The polypeptide is Trypsin inhibitor 1 (Momordica charantia (Bitter gourd)).